The sequence spans 347 residues: UDP-3-O-acylglucosamine N-acyltransferase (347 aa).

The Proton acceptor role is filled by histidine 248.

This sequence belongs to the transferase hexapeptide repeat family. LpxD subfamily. In terms of assembly, homotrimer.

The enzyme catalyses a UDP-3-O-[(3R)-3-hydroxyacyl]-alpha-D-glucosamine + a (3R)-hydroxyacyl-[ACP] = a UDP-2-N,3-O-bis[(3R)-3-hydroxyacyl]-alpha-D-glucosamine + holo-[ACP] + H(+). It participates in bacterial outer membrane biogenesis; LPS lipid A biosynthesis. Its function is as follows. Catalyzes the N-acylation of UDP-3-O-acylglucosamine using 3-hydroxyacyl-ACP as the acyl donor. Is involved in the biosynthesis of lipid A, a phosphorylated glycolipid that anchors the lipopolysaccharide to the outer membrane of the cell. In Parasynechococcus marenigrum (strain WH8102), this protein is UDP-3-O-acylglucosamine N-acyltransferase.